Reading from the N-terminus, the 149-residue chain is Small ribosomal subunit protein bS16 (149 aa).

The disordered stretch occupies residues 115–149 (KLKAAKSEADAKAKAEAEAAATEEAPAEEPAAEAE). Residues 119–131 (AKSEADAKAKAEA) show a composition bias toward basic and acidic residues. Residues 139 to 149 (APAEEPAAEAE) show a composition bias toward acidic residues.

The protein belongs to the bacterial ribosomal protein bS16 family.

This is Small ribosomal subunit protein bS16 from Bifidobacterium adolescentis (strain ATCC 15703 / DSM 20083 / NCTC 11814 / E194a).